A 529-amino-acid polypeptide reads, in one-letter code: G-protein coupled receptor 161 (529 aa).

Residues 1 to 30 (MSLNSSLSCRKELSNLTEEEGGEGGVIITQ) are Extracellular-facing. N4 and N15 each carry an N-linked (GlcNAc...) asparagine glycan. The helical transmembrane segment at 31–51 (FIAIIVITIFVCLGNLVIVVT) threads the bilayer. Topologically, residues 52–64 (LYKKSYLLTLSNK) are cytoplasmic. The chain crosses the membrane as a helical span at residues 65-85 (FVFSLTLSNFLLSVLVLPFVV). Residues 86 to 101 (TSSIRREWIFGVVWCN) are Extracellular-facing. A disulfide bond links C100 and C178. Residues 102-123 (FSALLYLLISSASMLTLGVIAI) form a helical membrane-spanning segment. Over 124-143 (DRYYAVLYPMVYPMKITGNR) the chain is Cytoplasmic. A helical membrane pass occupies residues 144–164 (AVMALVYIWLHSLIGCLPPLF). At 165-190 (GWSSVEFDEFKWMCVAAWHREPGYTA) the chain is on the extracellular side. A helical transmembrane segment spans residues 191-211 (FWQIWCALFPFLVMLVCYGFI). At 212-269 (FRVARVKARKVHCGTVVIVEEDAQRTGRKNSSTSTSSSGSRRNAFQGVVYSANQCKAL) the chain is on the cytoplasmic side. A helical membrane pass occupies residues 270–290 (ITILVVLGAFMVTWGPYMVVI). Residues 291–306 (ASEALWGKSSVSPSLE) are Extracellular-facing. A helical transmembrane segment spans residues 307–327 (TWATWLSFASAVCHPLIYGLW). The Cytoplasmic segment spans residues 328–529 (NKTVRKELLG…EGDVLAAEQR (202 aa)).

This sequence belongs to the G-protein coupled receptor 1 family.

The protein resides in the cell projection. Its subcellular location is the cilium membrane. It is found in the cell membrane. Functionally, key negative regulator of Shh signaling, which promotes the processing of GLI3 into GLI3R during neural tube development. Recruited by TULP3 and the IFT-A complex to primary cilia and acts as a regulator of the PKA-dependent basal repression machinery in Shh signaling by increasing cAMP levels, leading to promote the PKA-dependent processing of GLI3 into GLI3R and repress the Shh signaling. In presence of SHH, it is removed from primary cilia and is internalized into recycling endosomes, preventing its activity and allowing activation of the Shh signaling. Its ligand is unknown. The polypeptide is G-protein coupled receptor 161 (GPR161) (Homo sapiens (Human)).